Consider the following 142-residue polypeptide: MAKKVQAYVKLQVAAGMANPSPPVGPALGQQGVNIMEFCKAFNAKTESLEKGLPTPVVITVYADRSFTFITKTPPAAVLLKKAAGIKSGSGKPNKDKVGKISRTQLQEIAQTKAADMTGSDIEAMTRSIEGTARSMGLVVED.

The protein belongs to the universal ribosomal protein uL11 family. Part of the ribosomal stalk of the 50S ribosomal subunit. Interacts with L10 and the large rRNA to form the base of the stalk. L10 forms an elongated spine to which L12 dimers bind in a sequential fashion forming a multimeric L10(L12)X complex. In terms of processing, one or more lysine residues are methylated.

Functionally, forms part of the ribosomal stalk which helps the ribosome interact with GTP-bound translation factors. This Enterobacter sp. (strain 638) protein is Large ribosomal subunit protein uL11.